The sequence spans 229 residues: Large ribosomal subunit protein uL1 (229 aa).

Belongs to the universal ribosomal protein uL1 family. Part of the 50S ribosomal subunit.

Functionally, binds directly to 23S rRNA. The L1 stalk is quite mobile in the ribosome, and is involved in E site tRNA release. Protein L1 is also a translational repressor protein, it controls the translation of the L11 operon by binding to its mRNA. In Rhodopseudomonas palustris (strain BisB5), this protein is Large ribosomal subunit protein uL1.